Here is a 396-residue protein sequence, read N- to C-terminus: MSLPFSQDERDLAAGGILTIDLAALRHNYSAIATRIAPTRTAAVVKADAYGLGASRVAPAFYEAGCRDFFVAHLGEAVALKPFLKPDATLYVLNGLQPGTEAACAREGILPVLNSLEQVENWAALATRLGKKLPALLQFDTGMSRLGLSAKEFDRLLENVTLLSRIDIKFAISHLANGDEPGNAANARQLAKMTALLARLPKLPAALANSGGTFLGKTYYFDLARPGIALYGIDPERQHDFSDKVAHENKKPKHSILPVLTLSARVIQVRDVDKGATVGYGGTYVANGPMRIATIAVGYADGLFRSLSNKGAAFFGDTRLPIIGRVSMDSITLDVTSLPEGTLKLGSLVELIGPHQRLEDVARDCDTIPYEILTALGNRYARVYVYVNGGGTSTTA.

The active-site Proton acceptor; specific for D-alanine is K46. K46 is modified (N6-(pyridoxal phosphate)lysine). Position 145 (R145) interacts with substrate. Y280 serves as the catalytic Proton acceptor; specific for L-alanine. Residue M328 coordinates substrate.

This sequence belongs to the alanine racemase family. Requires pyridoxal 5'-phosphate as cofactor.

The catalysed reaction is L-alanine = D-alanine. It functions in the pathway amino-acid biosynthesis; D-alanine biosynthesis; D-alanine from L-alanine: step 1/1. Catalyzes the interconversion of L-alanine and D-alanine. May also act on other amino acids. The chain is Alanine racemase (alr) from Brucella canis (strain ATCC 23365 / NCTC 10854 / RM-666).